Here is a 215-residue protein sequence, read N- to C-terminus: 3-isopropylmalate dehydratase small subunit (215 aa).

Belongs to the LeuD family. LeuD type 1 subfamily. In terms of assembly, heterodimer of LeuC and LeuD.

It carries out the reaction (2R,3S)-3-isopropylmalate = (2S)-2-isopropylmalate. The protein operates within amino-acid biosynthesis; L-leucine biosynthesis; L-leucine from 3-methyl-2-oxobutanoate: step 2/4. Functionally, catalyzes the isomerization between 2-isopropylmalate and 3-isopropylmalate, via the formation of 2-isopropylmaleate. The protein is 3-isopropylmalate dehydratase small subunit of Hahella chejuensis (strain KCTC 2396).